Reading from the N-terminus, the 258-residue chain is MCFFALEEWAAANRDYENTPAPYWHVKSVPDGFTAISGILWSISYILMAKKAFKDRSYAMPLHCLCLNITWEAVYGFVYGPGLLNQVVFAQWMIVDVVLFYAILRSAPYAWKQSPLVAQHLAGIIVVGCVICLWLHLAIAATFIPSIGRQVVFMTAWPMQVLINFSSIAQLLSRGNTLGHSWGIWWTRMLGTIAAACCFFWRIHYWPERFGYAWTPYGKFLLLGSIGSDMVYAAVYVYVQRIEKQLDSLVNTKAQKAR.

Helical transmembrane passes span 29-49, 58-78, 83-103, 124-144, 151-171, 181-201, and 220-240; these read VPDG…ILMA, YAMP…YGFV, LLNQ…FYAI, IIVV…ATFI, VVFM…IAQL, SWGI…CFFW, and FLLL…VYVQ.

This sequence belongs to the paxB family.

Its subcellular location is the membrane. The protein operates within secondary metabolite biosynthesis; terpenoid biosynthesis. Terpene cyclase; part of the gene cluster that mediates the biosynthesis of macrophorins, isoprenoid epoxycyclohexenones containing cyclized drimane moieties. The first step of the pathway is the synthesis of 6-methylsalicylic acid (6-MSA) by the polyketide synthase macA. 6-MSA is then converted to m-cresol by the decarboxylase macB. The cytochrome P450 monooxygenase macC then catalyzes the oxidation of m-cresol to toluquinol. Epoxidation of toluquinol is then performed by the short chain dehydrogenase macD, with the help of macE, and a further prenylation by macG leads to 7-deacetoxyyanuthone A. The next step is the hydroxylation of C-22 of 7-deacetoxyyanuthone A by the cytochrome P450 monooxygenase macH to yield 22-deacetylyanuthone A. O-Mevalon transferase macI then attaches mevalon to the hydroxyl group of 22-deacetylyanuthone A to produce yanuthone E. The terpene cyclase macJ catalyzes the cyclization of 22-deacetylyanuthone A to macrophorin A. MacJ is also able to catalyze cyclization of yanuthone E and 7-deacetoxyyanuthone A to their corresponding macrophorins. The macJ products can be further modified by macH and macJ, as well as by the FAD-dependent monooxygenase macF, to produce additional macrophorins, including 4'-oxomacrophorin A, 4'-oxomacrophorin D and 4'-oxomacrophorin E. This Penicillium terrestre protein is Terpene cyclase macJ.